A 689-amino-acid chain; its full sequence is MNLLSHQLRDRFPIKAIISKADEVIFANYKHTNDFFKITATTYALINSVIVSNNCCNRRFHSTWQKKKHDDLTATVPVIDFRKNQKLTSIVVNAIQAIYWYARRSNCLTGINEAEYIWKSLIPESIFYHFVSLQSFIRKYLTDVFYCSAQKVILLSTDDSVVSSEKLYIRIASILSNANDKVSFKESSINTNTVFKDVYVEVSSHNDEFLLKNSSKCWAFTSLLVDPLHFMFSQIVFEDLSGKKIMKFEDTAVSTASNHSKQFTKGNLLAIKYIGGLYNAVYLMGLKKNLLAFVENEKDDLFVAKIFLLAYSSSKNRKKIVPVDVWDAMIDSLYETINVEETKKETYKFTRSIKTVIPNKLISNESISILSIPESEKTIYQNFDLYVSKFNVARKELSEKELFNNSFSSSFNTLLASLLVKPTLCLISYLMIAKKMVVLQEANRLFLKSFAHPFHLERYHLHAVAAMGGLYQIMSSTHLKNLFFCSRKGIALTKLHSQQYNESTLFQYLSEFVHQRQKSLTPKQRIAIQELILKFMQRNFENSLYHQSFSSHWFISRLLINPIRMLCWHITDVGKTLDLGEAEKLLKYNHKQCPYIIYPSSLKAVQKLGGLQCIIRNDNLSHIFNCSRKYIRVQRYSDDDLSESSLLPRLVNLLLFFENSMGEVAWNKLSQTLMDMFEKETKSNSLSDY.

The protein localises to the mitochondrion. This is an uncharacterized protein from Schizosaccharomyces pombe (strain 972 / ATCC 24843) (Fission yeast).